Here is a 296-residue protein sequence, read N- to C-terminus: Phosphatidylglycerol--prolipoprotein diacylglyceryl transferase (296 aa).

Helical transmembrane passes span 10 to 30 (IAFS…LAAF), 57 to 77 (LLFY…MLFY), 92 to 112 (VWEG…ACWL), and 119 to 139 (LHFF…LGFG). Residue Arg-140 coordinates a 1,2-diacyl-sn-glycero-3-phospho-(1'-sn-glycerol). The next 3 membrane-spanning stretches (helical) occupy residues 194–214 (QLYE…TFSM), 220–240 (YALS…VEFV), and 254–274 (WLTM…ALLA).

The protein belongs to the Lgt family.

Its subcellular location is the cell inner membrane. It carries out the reaction L-cysteinyl-[prolipoprotein] + a 1,2-diacyl-sn-glycero-3-phospho-(1'-sn-glycerol) = an S-1,2-diacyl-sn-glyceryl-L-cysteinyl-[prolipoprotein] + sn-glycerol 1-phosphate + H(+). It functions in the pathway protein modification; lipoprotein biosynthesis (diacylglyceryl transfer). Catalyzes the transfer of the diacylglyceryl group from phosphatidylglycerol to the sulfhydryl group of the N-terminal cysteine of a prolipoprotein, the first step in the formation of mature lipoproteins. The sequence is that of Phosphatidylglycerol--prolipoprotein diacylglyceryl transferase from Xanthomonas oryzae pv. oryzae (strain MAFF 311018).